We begin with the raw amino-acid sequence, 302 residues long: 4-hydroxy-tetrahydrodipicolinate synthase (302 aa).

T55 serves as a coordination point for pyruvate. The active-site Proton donor/acceptor is Y144. The Schiff-base intermediate with substrate role is filled by K172. V214 contributes to the pyruvate binding site.

The protein belongs to the DapA family. Homotetramer; dimer of dimers.

The protein resides in the cytoplasm. It catalyses the reaction L-aspartate 4-semialdehyde + pyruvate = (2S,4S)-4-hydroxy-2,3,4,5-tetrahydrodipicolinate + H2O + H(+). It participates in amino-acid biosynthesis; L-lysine biosynthesis via DAP pathway; (S)-tetrahydrodipicolinate from L-aspartate: step 3/4. Functionally, catalyzes the condensation of (S)-aspartate-beta-semialdehyde [(S)-ASA] and pyruvate to 4-hydroxy-tetrahydrodipicolinate (HTPA). The protein is 4-hydroxy-tetrahydrodipicolinate synthase of Prochlorococcus marinus (strain MIT 9211).